Reading from the N-terminus, the 795-residue chain is Phenylalanine--tRNA ligase beta subunit (795 aa).

Residues 39 to 148 enclose the tRNA-binding domain; the sequence is AGSFHGVVVG…ADAPIGTDIR (110 aa). The region spanning 401 to 476 is the B5 domain; sequence PKRATITLRR…RVYGYNNIPD (76 aa). Mg(2+) contacts are provided by D454, D460, E463, and E464. The FDX-ACB domain occupies 701-794; that stretch reads SRFPANRRDI…LKERFQASLR (94 aa).

This sequence belongs to the phenylalanyl-tRNA synthetase beta subunit family. Type 1 subfamily. In terms of assembly, tetramer of two alpha and two beta subunits. The cofactor is Mg(2+).

The protein resides in the cytoplasm. It carries out the reaction tRNA(Phe) + L-phenylalanine + ATP = L-phenylalanyl-tRNA(Phe) + AMP + diphosphate + H(+). The sequence is that of Phenylalanine--tRNA ligase beta subunit from Shigella sonnei (strain Ss046).